We begin with the raw amino-acid sequence, 198 residues long: Probable molybdenum cofactor guanylyltransferase (198 aa).

GTP-binding positions include L9 to G11, K22, D66, and D95. Position 95 (D95) interacts with Mg(2+).

It belongs to the MobA family. It depends on Mg(2+) as a cofactor.

It is found in the cytoplasm. The enzyme catalyses Mo-molybdopterin + GTP + H(+) = Mo-molybdopterin guanine dinucleotide + diphosphate. Functionally, transfers a GMP moiety from GTP to Mo-molybdopterin (Mo-MPT) cofactor (Moco or molybdenum cofactor) to form Mo-molybdopterin guanine dinucleotide (Mo-MGD) cofactor. The chain is Probable molybdenum cofactor guanylyltransferase from Clostridium perfringens (strain 13 / Type A).